The sequence spans 445 residues: Ubiquitin carboxyl-terminal hydrolase 11 (445 aa).

The USP domain occupies 1–412; it reads NSARADLCVA…AAYVLFYQRQ (412 aa). A disordered region spans residues 127–194; sequence RPSSDDEDDG…GPSHWPQRAR (68 aa). S130 carries the phosphoserine modification. The segment covering 131 to 140 has biased composition (acidic residues); it reads DDEDDGDEKD. H362 (nucleophile) is an active-site residue. The Proton acceptor role is filled by H370. The segment at 416 to 445 is disordered; it reads RRLQPQPSSSDPPASPACGSPPNSEFMDVN. Positions 420–439 are enriched in low complexity; it reads PQPSSSDPPASPACGSPPNS. Position 430 is a phosphoserine (S430).

This sequence belongs to the peptidase C19 family. Monomer. Interacts with RANBP9/RANBPM. Interacts with BRCA2. Interacts with CHUK/IKKA. Interacts with NFKBIA. Associated component of the Polycomb group (PcG) multiprotein PRC1-like complex.

The protein resides in the nucleus. It is found in the cytoplasm. The protein localises to the chromosome. It carries out the reaction Thiol-dependent hydrolysis of ester, thioester, amide, peptide and isopeptide bonds formed by the C-terminal Gly of ubiquitin (a 76-residue protein attached to proteins as an intracellular targeting signal).. Functionally, protease that can remove conjugated ubiquitin from target proteins and polyubiquitin chains. Inhibits the degradation of target proteins by the proteasome. Cleaves preferentially 'Lys-6' and 'Lys-63'-linked ubiquitin chains. Has lower activity with 'Lys-11' and 'Lys-33'-linked ubiquitin chains, and extremely low activity with 'Lys-27', 'Lys-29' and 'Lys-48'-linked ubiquitin chains (in vitro). Plays a role in the regulation of pathways leading to NF-kappa-B activation. Plays a role in the regulation of DNA repair after double-stranded DNA breaks. Acts as a chromatin regulator via its association with the Polycomb group (PcG) multiprotein PRC1-like complex; may act by deubiquitinating components of the PRC1-like complex. Promotes cell proliferation by deubiquitinating phosphorylated E2F1. The protein is Ubiquitin carboxyl-terminal hydrolase 11 (USP11) of Canis lupus familiaris (Dog).